A 29-amino-acid chain; its full sequence is Tail virion protein G7P (29 aa).

A helical transmembrane segment spans residues 8-28; it reads VVIALGLVISFGLGAITAGVL.

The protein belongs to the inovirus G7P protein family.

The protein localises to the virion. The protein resides in the host membrane. Its function is as follows. May initiate with G9P the virion concomitant assembly-budding process, by interacting with the packaging signal of the viral genome. The assembly-budding takes place at the host inner membrane. In turn, G7P and G9P are present at the end of the filamentous virion that emerges first from the bacterial host. The chain is Tail virion protein G7P (VII) from Escherichia coli (Bacteriophage I2-2).